A 694-amino-acid chain; its full sequence is Probable metal-nicotianamine transporter YSL8 (694 aa).

The next 14 helical transmembrane spans lie at 38-58 (ITVRSLVVSAVLGTFLSFIVM), 62-82 (LTSGIVPSLNVSAGLLAFFLM), 110-130 (CVISCSSIAFSGGFGTYILGM), 154-174 (LGRLIAFLFLVSFVGLFSIVP), 215-235 (ILFKSFVGSFLWSLFQWFYAA), 265-285 (VGVGMICPYIINFSLLIGSVV), 319-339 (VFISIAMIVGDGLFNFFSIVL), 393-413 (IAAAAYVLLAAISVVAIPHIF), 421-441 (VVWAYVVAPLFAFCNAYGTGL), 467-487 (GGVVAGLAACGLMMGIVSTAS), 506-526 (MFVSQVLGTGMGCIISPMVFW), 567-587 (LRFCLAFFLLAIAICALKEVA), 608-628 (FFLGSFFTIDMCVGSLVLFLW), and 643-663 (VASGLICGDGIWSLPSSILSL).

It belongs to the YSL (TC 2.A.67.2) family. In terms of tissue distribution, expressed in root epidermis and exoderm.

It localises to the membrane. In terms of biological role, may be involved in the transport of nicotianamine-chelated metals. In Oryza sativa subsp. japonica (Rice), this protein is Probable metal-nicotianamine transporter YSL8 (YSL8).